The sequence spans 27 residues: Delta-conotoxin TsVIA (27 aa).

Disulfide bonds link C1–C17, C8–C21, and C16–C25.

It belongs to the conotoxin O1 superfamily. In terms of tissue distribution, expressed by the venom duct.

It is found in the secreted. Delta-conotoxins bind to site 6 of voltage-gated sodium channels (Nav) and inhibit the inactivation process. This toxin inhibits tetrodotoxin(TTX)-sensitive sodium channels. A test on mouse Nav1.6/SCN8A confirms this sensitivity. The chain is Delta-conotoxin TsVIA from Conus tessulatus (Tessellate cone).